Reading from the N-terminus, the 414-residue chain is Light-independent protochlorophyllide reductase subunit N (414 aa).

C16, C41, and C98 together coordinate [4Fe-4S] cluster.

This sequence belongs to the BchN/ChlN family. As to quaternary structure, protochlorophyllide reductase is composed of three subunits; BchL, BchN and BchB. Forms a heterotetramer of two BchB and two BchN subunits. Requires [4Fe-4S] cluster as cofactor.

The catalysed reaction is chlorophyllide a + oxidized 2[4Fe-4S]-[ferredoxin] + 2 ADP + 2 phosphate = protochlorophyllide a + reduced 2[4Fe-4S]-[ferredoxin] + 2 ATP + 2 H2O. Its pathway is porphyrin-containing compound metabolism; bacteriochlorophyll biosynthesis (light-independent). In terms of biological role, component of the dark-operative protochlorophyllide reductase (DPOR) that uses Mg-ATP and reduced ferredoxin to reduce ring D of protochlorophyllide (Pchlide) to form chlorophyllide a (Chlide). This reaction is light-independent. The NB-protein (BchN-BchB) is the catalytic component of the complex. In Roseiflexus castenholzii (strain DSM 13941 / HLO8), this protein is Light-independent protochlorophyllide reductase subunit N.